Here is a 226-residue protein sequence, read N- to C-terminus: Teichuronic acid biosynthesis protein TuaF (226 aa).

2 helical membrane-spanning segments follow: residues 15-35 and 202-222; these read NIIW…ILPS and VLGV…PEFF.

It is found in the cell membrane. The protein operates within cell wall biogenesis; teichuronic acid biosynthesis. The chain is Teichuronic acid biosynthesis protein TuaF (tuaF) from Bacillus subtilis (strain 168).